The sequence spans 202 residues: Small ribosomal subunit protein uS4 (202 aa).

The S4 RNA-binding domain maps to 91-157 (CRLDNVVYRA…TPFIVARETH (67 aa)).

It belongs to the universal ribosomal protein uS4 family. In terms of assembly, part of the 30S ribosomal subunit. Contacts protein S5. The interaction surface between S4 and S5 is involved in control of translational fidelity.

Its function is as follows. One of the primary rRNA binding proteins, it binds directly to 16S rRNA where it nucleates assembly of the body of the 30S subunit. With S5 and S12 plays an important role in translational accuracy. The protein is Small ribosomal subunit protein uS4 of Nocardioides sp. (strain ATCC BAA-499 / JS614).